The chain runs to 122 residues: Ribosomal protein eL22-like 1 (122 aa).

Ser112, Ser118, and Ser120 each carry phosphoserine.

Belongs to the eukaryotic ribosomal protein eL22 family.

This chain is Ribosomal protein eL22-like 1 (Rpl22l1), found in Mus musculus (Mouse).